The sequence spans 200 residues: Ras-related protein Rab-10 (200 aa).

Residues Ser-18, Gly-19, Val-20, Gly-21, Lys-22, Thr-23, Cys-24, Asn-35, Thr-36, Ser-40, and Thr-41 each contribute to the GTP site. Thr-23 lines the Mg(2+) pocket. Short sequence motifs (switch) lie at residues 32–46 (DAFNTTFISTIGIDF) and 64–81 (DTAGQERFHTITTSYYRG). Mg(2+) contacts are provided by Thr-41 and Asp-64. Positions 67, 122, 123, 125, 126, 152, 153, and 154 each coordinate GTP. The segment at 181–200 (RENVDISTTGGGTGLKKCCS) is disordered. 2 S-geranylgeranyl cysteine lipidation sites follow: Cys-198 and Cys-199.

It belongs to the small GTPase superfamily. Rab family. The cofactor is Mg(2+).

It localises to the cytoplasmic vesicle membrane. It is found in the golgi apparatus. The protein localises to the trans-Golgi network membrane. Its subcellular location is the endosome membrane. The protein resides in the recycling endosome membrane. It localises to the cytoplasmic vesicle. It is found in the phagosome membrane. The protein localises to the cell projection. Its subcellular location is the cilium. The protein resides in the endoplasmic reticulum membrane. It catalyses the reaction GTP + H2O = GDP + phosphate + H(+). With respect to regulation, regulated by guanine nucleotide exchange factors (GEFs) which promote the exchange of bound GDP for free GTP. Regulated by GTPase activating proteins (GAPs) which increase the GTP hydrolysis activity. Inhibited by GDP dissociation inhibitors (GDIs) which prevent Rab-GDP dissociation. The small GTPases Rab are key regulators of intracellular membrane trafficking, from the formation of transport vesicles to their fusion with membranes. Rabs cycle between an inactive GDP-bound form and an active GTP-bound form that is able to recruit to membranes different set of downstream effectors directly responsible for vesicle formation, movement, tethering and fusion. That Rab is mainly involved in the biosynthetic transport of proteins from the Golgi to the plasma membrane. Also plays a specific role in asymmetric protein transport to the plasma membrane within the polarized neuron and epithelial cells. In neurons, it is involved in axonogenesis through regulation of vesicular membrane trafficking toward the axonal plasma membrane while in epithelial cells, it regulates transport from the Golgi to the basolateral membrane. Moreover, may play a role in the basolateral recycling pathway and in phagosome maturation. Finally, may play a role in endoplasmic reticulum dynamics and morphology controlling tubulation along microtubules and tubules fusion. May participate in the export of neosynthesized proteins through a Rab-dependent endosomal export route. The sequence is that of Ras-related protein Rab-10 from Diplobatis ommata (Ocellated electric ray).